The sequence spans 109 residues: Nucleoid-associated protein APL_0075 (109 aa).

The interval 1–21 (MFGKGGLGGLMKQAQQMQERM) is disordered. The segment covering 10–19 (LMKQAQQMQE) has biased composition (low complexity).

It belongs to the YbaB/EbfC family. In terms of assembly, homodimer.

The protein resides in the cytoplasm. Its subcellular location is the nucleoid. Binds to DNA and alters its conformation. May be involved in regulation of gene expression, nucleoid organization and DNA protection. The polypeptide is Nucleoid-associated protein APL_0075 (Actinobacillus pleuropneumoniae serotype 5b (strain L20)).